Reading from the N-terminus, the 208-residue chain is MFKDYYAILNITPKASAEEIKYAYKKAALETHPDRVSPSARARATEQFQLVNEAYYVLSDNSRRAQYDRESASSSAKPRQSFFSRTNPQPQSQSQQGGPSFGFRQSFSDSQFEQVFNEMMNETSTRGIANAFWTIVGTLAGAALGFITFDVPGVLVGSAAGAKLGRIRDTHGKSAYSVFQDMPAVEKARILTQFLSHLLNSSKQFTSS.

The 68-residue stretch at Asp-4 to Ser-71 folds into the J domain. The interval Tyr-67–Ser-100 is disordered. Over residues Ala-72 to Asn-87 the composition is skewed to polar residues. The segment covering Pro-88–Ser-100 has biased composition (low complexity). A helical transmembrane segment spans residues Gly-127 to Ile-147.

The protein belongs to the DnaJ family.

The protein resides in the endoplasmic reticulum membrane. This is an uncharacterized protein from Schizosaccharomyces pombe (strain 972 / ATCC 24843) (Fission yeast).